The chain runs to 415 residues: Mitochondrial distribution and morphology protein 12 (415 aa).

The SMP-LTD domain maps to 1–402 (MSFDINWSEL…WPSWVCFDLN (402 aa)). The interval 53–146 (EITIRHIGDP…PPLTDLRRSR (94 aa)) is disordered. Acidic residues-rich tracts occupy residues 62-75 (PFDD…DDDE) and 92-103 (NSSDDDEDDEYD).

Belongs to the MDM12 family. As to quaternary structure, component of the ER-mitochondria encounter structure (ERMES) or MDM complex, composed of MMM1, MDM10, MDM12 and MDM34. An MMM1 homodimer associates with one molecule of MDM12 on each side in a pairwise head-to-tail manner, and the SMP-LTD domains of MMM1 and MDM12 generate a continuous hydrophobic tunnel for phospholipid trafficking.

Its subcellular location is the mitochondrion outer membrane. It localises to the endoplasmic reticulum membrane. Functionally, component of the ERMES/MDM complex, which serves as a molecular tether to connect the endoplasmic reticulum (ER) and mitochondria. Components of this complex are involved in the control of mitochondrial shape and protein biogenesis, and function in nonvesicular lipid trafficking between the ER and mitochondria. MDM12 is required for the interaction of the ER-resident membrane protein MMM1 and the outer mitochondrial membrane-resident beta-barrel protein MDM10. The MDM12-MMM1 subcomplex functions in the major beta-barrel assembly pathway that is responsible for biogenesis of all mitochondrial outer membrane beta-barrel proteins, and acts in a late step after the SAM complex. The MDM10-MDM12-MMM1 subcomplex further acts in the TOM40-specific pathway after the action of the MDM12-MMM1 complex. Essential for establishing and maintaining the structure of mitochondria and maintenance of mtDNA nucleoids. This is Mitochondrial distribution and morphology protein 12 from Debaryomyces hansenii (strain ATCC 36239 / CBS 767 / BCRC 21394 / JCM 1990 / NBRC 0083 / IGC 2968) (Yeast).